Consider the following 65-residue polypeptide: Small ribosomal subunit protein eS31 (65 aa).

Positions 36, 39, 55, and 58 each coordinate Zn(2+). The C4-type zinc-finger motif lies at 36–58 (CPKCGSVMAFHREPVPRWHCGKC).

This sequence belongs to the eukaryotic ribosomal protein eS31 family. Part of the 30S ribosomal subunit. Zn(2+) serves as cofactor.

This is Small ribosomal subunit protein eS31 from Pyrobaculum calidifontis (strain DSM 21063 / JCM 11548 / VA1).